A 160-amino-acid chain; its full sequence is Major pollen allergen Bet v 1-M/N (160 aa).

Residues Lys55, Tyr82, Tyr84, and Asn101 each coordinate brassinolide.

This sequence belongs to the BetVI family.

The protein localises to the cytoplasm. Its function is as follows. May be a general steroid carrier protein. In Betula pendula (European white birch), this protein is Major pollen allergen Bet v 1-M/N (BETV1M).